The sequence spans 245 residues: MDKTELIQKAKLAEQAERYDDMATCMKAVTEQGAELSNEERNLLSVAYKNVVGGRRSAWRVISSIEQKTDTSDKKMQLIKDYREKVESELRSICTTVLELLDKYLIANATNPESKVFYLKMKGDYFRYLAEVACGDDRKQTIENSQGAYQEAFDISKKEMQPTHPIRLGLALNFSVFYYEILNNPELACTLAKTAFDEAIAELDTLNEDSYKDSTLIMQLLRDNLTLWTSDSAGEECDAAEGAEN.

The protein belongs to the 14-3-3 family. Homodimer, and heterodimer with other family members.

The protein resides in the cytoplasm. Its function is as follows. Adapter protein implicated in the regulation of a large spectrum of both general and specialized signaling pathways. Binds to a large number of partners, usually by recognition of a phosphoserine or phosphothreonine motif. Binding generally results in the modulation of the activity of the binding partner. The protein is 14-3-3 protein theta (YWHAQ) of Gallus gallus (Chicken).